We begin with the raw amino-acid sequence, 273 residues long: Putative pyruvate, phosphate dikinase regulatory protein (273 aa).

149-156 provides a ligand contact to ADP; that stretch reads GPSRTSKT.

It belongs to the pyruvate, phosphate/water dikinase regulatory protein family. PDRP subfamily.

It catalyses the reaction N(tele)-phospho-L-histidyl/L-threonyl-[pyruvate, phosphate dikinase] + ADP = N(tele)-phospho-L-histidyl/O-phospho-L-threonyl-[pyruvate, phosphate dikinase] + AMP + H(+). The catalysed reaction is N(tele)-phospho-L-histidyl/O-phospho-L-threonyl-[pyruvate, phosphate dikinase] + phosphate + H(+) = N(tele)-phospho-L-histidyl/L-threonyl-[pyruvate, phosphate dikinase] + diphosphate. Bifunctional serine/threonine kinase and phosphorylase involved in the regulation of the pyruvate, phosphate dikinase (PPDK) by catalyzing its phosphorylation/dephosphorylation. The chain is Putative pyruvate, phosphate dikinase regulatory protein from Rickettsia massiliae (strain Mtu5).